A 453-amino-acid chain; its full sequence is mRNA cleavage and polyadenylation factor CLP1 (453 aa).

ATP-binding positions include E31, K70, and 146–151; that span reads NSGKTS.

This sequence belongs to the Clp1 family. Clp1 subfamily. In terms of assembly, component of a pre-mRNA cleavage factor complex. Interacts directly with PCF11.

The protein localises to the nucleus. Its function is as follows. Required for endonucleolytic cleavage during polyadenylation-dependent pre-mRNA 3'-end formation. The sequence is that of mRNA cleavage and polyadenylation factor CLP1 from Scheffersomyces stipitis (strain ATCC 58785 / CBS 6054 / NBRC 10063 / NRRL Y-11545) (Yeast).